Here is an 86-residue protein sequence, read N- to C-terminus: Small ribosomal subunit protein uS17 (86 aa).

It belongs to the universal ribosomal protein uS17 family. As to quaternary structure, part of the 30S ribosomal subunit.

Its function is as follows. One of the primary rRNA binding proteins, it binds specifically to the 5'-end of 16S ribosomal RNA. The chain is Small ribosomal subunit protein uS17 from Streptococcus pyogenes serotype M3 (strain ATCC BAA-595 / MGAS315).